The primary structure comprises 377 residues: Chaperone protein DnaJ (377 aa).

Residues 5 to 70 (DYYEILGVSK…EKRSAYDQYG (66 aa)) enclose the J domain. A CR-type zinc finger spans residues 131-209 (GVVREICVPT…CRGSGRIERT (79 aa)). Zn(2+) contacts are provided by cysteine 144, cysteine 147, cysteine 161, cysteine 164, cysteine 183, cysteine 186, cysteine 197, and cysteine 200. 4 CXXCXGXG motif repeats span residues 144 to 151 (CLQCRGSG), 161 to 168 (CVTCHGHG), 183 to 190 (CPSCNGHG), and 197 to 204 (CNKCRGSG).

This sequence belongs to the DnaJ family. In terms of assembly, homodimer. Zn(2+) serves as cofactor.

The protein resides in the cytoplasm. Functionally, participates actively in the response to hyperosmotic and heat shock by preventing the aggregation of stress-denatured proteins and by disaggregating proteins, also in an autonomous, DnaK-independent fashion. Unfolded proteins bind initially to DnaJ; upon interaction with the DnaJ-bound protein, DnaK hydrolyzes its bound ATP, resulting in the formation of a stable complex. GrpE releases ADP from DnaK; ATP binding to DnaK triggers the release of the substrate protein, thus completing the reaction cycle. Several rounds of ATP-dependent interactions between DnaJ, DnaK and GrpE are required for fully efficient folding. Also involved, together with DnaK and GrpE, in the DNA replication of plasmids through activation of initiation proteins. The protein is Chaperone protein DnaJ of Blochmanniella floridana.